Here is a 137-residue protein sequence, read N- to C-terminus: Nucleoside diphosphate kinase (137 aa).

Residues Lys-9, Phe-57, Arg-85, Thr-91, Arg-102, and Asn-112 each coordinate ATP. His-115 serves as the catalytic Pros-phosphohistidine intermediate.

This sequence belongs to the NDK family. As to quaternary structure, homotetramer. The cofactor is Mg(2+).

It localises to the cytoplasm. The enzyme catalyses a 2'-deoxyribonucleoside 5'-diphosphate + ATP = a 2'-deoxyribonucleoside 5'-triphosphate + ADP. It catalyses the reaction a ribonucleoside 5'-diphosphate + ATP = a ribonucleoside 5'-triphosphate + ADP. In terms of biological role, major role in the synthesis of nucleoside triphosphates other than ATP. The ATP gamma phosphate is transferred to the NDP beta phosphate via a ping-pong mechanism, using a phosphorylated active-site intermediate. This Campylobacter curvus (strain 525.92) protein is Nucleoside diphosphate kinase.